A 499-amino-acid polypeptide reads, in one-letter code: Glycerol kinase 2 (499 aa).

Threonine 13 contributes to the ADP binding site. 3 residues coordinate ATP: threonine 13, threonine 14, and serine 15. Residue threonine 13 coordinates sn-glycerol 3-phosphate. Arginine 17 is an ADP binding site. 4 residues coordinate sn-glycerol 3-phosphate: arginine 83, glutamate 84, tyrosine 134, and aspartate 241. 5 residues coordinate glycerol: arginine 83, glutamate 84, tyrosine 134, aspartate 241, and glutamine 242. The ADP site is built by threonine 263 and glycine 306. Threonine 263, glycine 306, glutamine 310, and glycine 407 together coordinate ATP. An ADP-binding site is contributed by glycine 407.

This sequence belongs to the FGGY kinase family.

The enzyme catalyses glycerol + ATP = sn-glycerol 3-phosphate + ADP + H(+). The protein operates within polyol metabolism; glycerol degradation via glycerol kinase pathway; sn-glycerol 3-phosphate from glycerol: step 1/1. In terms of biological role, key enzyme in the regulation of glycerol uptake and metabolism. Catalyzes the phosphorylation of glycerol to yield sn-glycerol 3-phosphate. This is Glycerol kinase 2 from Saccharolobus solfataricus (strain ATCC 35092 / DSM 1617 / JCM 11322 / P2) (Sulfolobus solfataricus).